Reading from the N-terminus, the 444-residue chain is C4-dicarboxylate transport protein 3 (444 aa).

Helical transmembrane passes span 22–42 (VLYV…WLWP), 60–80 (LIKM…IAHI), 95–115 (VYFE…GNLV), 162–182 (GEIL…MSLG), 198–218 (AVFG…FGAM), 236–256 (LIAT…GIIA), 321–341 (IYMT…LSFG), 346–366 (ILVV…AGFI), and 399–419 (LTNL…EGEL).

This sequence belongs to the dicarboxylate/amino acid:cation symporter (DAACS) (TC 2.A.23) family.

It is found in the cell inner membrane. In terms of biological role, responsible for the transport of dicarboxylates such as succinate, fumarate, and malate from the periplasm across the membrane. This Bradyrhizobium diazoefficiens (strain JCM 10833 / BCRC 13528 / IAM 13628 / NBRC 14792 / USDA 110) protein is C4-dicarboxylate transport protein 3.